A 222-amino-acid polypeptide reads, in one-letter code: Triosephosphate isomerase (222 aa).

10-12 contributes to the substrate binding site; it reads NCK. His-93 serves as the catalytic Electrophile. The Proton acceptor role is filled by Glu-141. Substrate contacts are provided by residues Ile-146, Gly-180, and 201-202; that span reads AS.

It belongs to the triosephosphate isomerase family. As to quaternary structure, homotetramer; dimer of dimers.

The protein localises to the cytoplasm. It catalyses the reaction D-glyceraldehyde 3-phosphate = dihydroxyacetone phosphate. Its pathway is carbohydrate biosynthesis; gluconeogenesis. It functions in the pathway carbohydrate degradation; glycolysis; D-glyceraldehyde 3-phosphate from glycerone phosphate: step 1/1. In terms of biological role, involved in the gluconeogenesis. Catalyzes stereospecifically the conversion of dihydroxyacetone phosphate (DHAP) to D-glyceraldehyde-3-phosphate (G3P). The protein is Triosephosphate isomerase of Cenarchaeum symbiosum (strain A).